The following is a 347-amino-acid chain: S-adenosylmethionine:tRNA ribosyltransferase-isomerase (347 aa).

It belongs to the QueA family. In terms of assembly, monomer.

It is found in the cytoplasm. It catalyses the reaction 7-aminomethyl-7-carbaguanosine(34) in tRNA + S-adenosyl-L-methionine = epoxyqueuosine(34) in tRNA + adenine + L-methionine + 2 H(+). It participates in tRNA modification; tRNA-queuosine biosynthesis. In terms of biological role, transfers and isomerizes the ribose moiety from AdoMet to the 7-aminomethyl group of 7-deazaguanine (preQ1-tRNA) to give epoxyqueuosine (oQ-tRNA). The protein is S-adenosylmethionine:tRNA ribosyltransferase-isomerase of Halalkalibacterium halodurans (strain ATCC BAA-125 / DSM 18197 / FERM 7344 / JCM 9153 / C-125) (Bacillus halodurans).